The following is a 72-amino-acid chain: Sperm protein associated with the nucleus on the X chromosome N1 (72 aa).

A disordered region spans residues 1–40 (MEKPTSSTNGEKRKSPCDSNNKNDEMQETPNRDLVLEPSL). Basic and acidic residues predominate over residues 10–35 (GEKRKSPCDSNNKNDEMQETPNRDLV).

The protein belongs to the SPAN-X family.

In Gorilla gorilla gorilla (Western lowland gorilla), this protein is Sperm protein associated with the nucleus on the X chromosome N1 (SPANXN1).